A 276-amino-acid chain; its full sequence is Alpha N-terminal protein methyltransferase 1 (276 aa).

Residues glycine 96, arginine 101, 118-120 (EPV), 149-150 (LQ), and glutamine 165 each bind S-adenosyl-L-methionine.

The protein belongs to the methyltransferase superfamily. NTM1 family.

The enzyme catalyses N-terminal L-alanyl-L-prolyl-L-lysyl-[protein] + 3 S-adenosyl-L-methionine = N-terminal N,N,N-trimethyl-L-alanyl-L-prolyl-L-lysyl-[protein] + 3 S-adenosyl-L-homocysteine + 3 H(+). It catalyses the reaction N-terminal L-seryl-L-prolyl-L-lysyl-[protein] + 3 S-adenosyl-L-methionine = N-terminal N,N,N-trimethyl-L-seryl-L-prolyl-L-lysyl-[protein] + 3 S-adenosyl-L-homocysteine + 3 H(+). The catalysed reaction is N-terminal L-prolyl-L-prolyl-L-lysyl-[protein] + 2 S-adenosyl-L-methionine = N-terminal N,N-dimethyl-L-prolyl-L-prolyl-L-lysyl-[protein] + 2 S-adenosyl-L-homocysteine + 2 H(+). Functionally, alpha-N-methyltransferase that methylates the N-terminus of target proteins containing the N-terminal motif [Ala/Pro/Ser]-Pro-Lys when the initiator Met is cleaved. Specifically catalyzes mono-, di- or tri-methylation of exposed alpha-amino group of Ala or Ser residue in the [Ala/Ser]-Pro-Lys motif and mono- or di-methylation of Pro in the Pro-Pro-Lys motif. The polypeptide is Alpha N-terminal protein methyltransferase 1 (Arabidopsis thaliana (Mouse-ear cress)).